The primary structure comprises 202 residues: uncharacterized protein (202 aa).

An Isoglutamyl lysine isopeptide (Lys-Gln) (interchain with Q-Cter in protein Pup) cross-link involves residue K136.

This is an uncharacterized protein from Mycobacterium tuberculosis (strain CDC 1551 / Oshkosh).